A 440-amino-acid polypeptide reads, in one-letter code: Virion host shutoff protein (440 aa).

2 disordered regions span residues 98-144 (NIDH…RRKT) and 265-312 (IDEP…AGPG). Residues 266-281 (DEPPAASEESSASDQQ) are compositionally biased toward low complexity.

The protein belongs to the herpesviridae VHS protein family.

It is found in the virion. Its function is as follows. Minor structural protein that acts as an endoribonuclease during lytic infection. Degrades host mRNAs in the cytoplasm by cutting them at preferred sites, including some in regions of translation initiation. In Amazona oratrix (yellow-headed parrot), this protein is Virion host shutoff protein (UL41).